The primary structure comprises 260 residues: Large ribosomal subunit protein uL2 (260 aa).

The segment at 1-24 is disordered; it reads MGRVIRAQRKGAGSVFKSHTHHRK.

Belongs to the universal ribosomal protein uL2 family.

It localises to the cytoplasm. The protein is Large ribosomal subunit protein uL2 (RPL8) of Solanum lycopersicum (Tomato).